The primary structure comprises 343 residues: Heat-inducible transcription repressor HrcA (343 aa).

It belongs to the HrcA family.

In terms of biological role, negative regulator of class I heat shock genes (grpE-dnaK-dnaJ and groELS operons). Prevents heat-shock induction of these operons. The protein is Heat-inducible transcription repressor HrcA of Mycolicibacterium vanbaalenii (strain DSM 7251 / JCM 13017 / BCRC 16820 / KCTC 9966 / NRRL B-24157 / PYR-1) (Mycobacterium vanbaalenii).